A 56-amino-acid polypeptide reads, in one-letter code: Large ribosomal subunit protein bL32 (56 aa).

The segment at 1–37 is disordered; the sequence is MAVQQNKKSRSKRGMRRSHDALSTAQLSVDATSGELH. The segment covering 7–16 has biased composition (basic residues); sequence KKSRSKRGMR. Residues 21 to 31 are compositionally biased toward polar residues; it reads ALSTAQLSVDA.

This sequence belongs to the bacterial ribosomal protein bL32 family.

In Shewanella pealeana (strain ATCC 700345 / ANG-SQ1), this protein is Large ribosomal subunit protein bL32.